The chain runs to 267 residues: Cyclin-C (267 aa).

Residues 48–151 (IQVLGEQLKL…LLENLDCCLI (104 aa)) enclose the Cyclin N-terminal domain.

This sequence belongs to the cyclin family. Cyclin C subfamily. Component of the Cdk8 module of the Mediator complex, composed of CycC, Cdk8, kto and skd.

The protein resides in the nucleus. Its function is as follows. Component of the Mediator complex, a coactivator involved in regulated gene transcription of nearly all RNA polymerase II-dependent genes. Mediator functions as a bridge to convey information from gene-specific regulatory proteins to the basal RNA polymerase II transcription machinery. Mediator is recruited to promoters by direct interactions with regulatory proteins and serves as a scaffold for the assembly of a functional preinitiation complex with RNA polymerase II and the general transcription factors. Binds to and activates cyclin-dependent kinase Cdk8 that phosphorylates the CTD (C-terminal domain) of the large subunit of RNA polymerase II (RNAp II), which may inhibit the formation of a transcription initiation complex. Required for leg and eye development and macrochaete specification or differentiation. The polypeptide is Cyclin-C (CycC) (Drosophila melanogaster (Fruit fly)).